We begin with the raw amino-acid sequence, 311 residues long: Cadmium, cobalt and zinc/H(+)-K(+) antiporter (311 aa).

Residues 1–12 (MGHNHNEGANKK) are Extracellular-facing. Residues 13–33 (VLLISFIMITGYMIIEAIGGF) traverse the membrane as a helical segment. The Cytoplasmic segment spans residues 34–43 (LTNSLALLSD). The chain crosses the membrane as a helical span at residues 44-64 (AGHMLSDSISLMVALIAFTLA). Residues 65–78 (EKKANHNKTFGYKR) are Extracellular-facing. The chain crosses the membrane as a helical span at residues 79–99 (FEILAAVINGAALILISLYII). Topologically, residues 100 to 115 (YEAIERFSNPPKVATT) are cytoplasmic. A helical transmembrane segment spans residues 116–136 (GMLTISIIGLVVNLLVAWIMM). At 137 to 157 (SGGDTKNNLNIRGAYLHVISD) the chain is on the extracellular side. A helical membrane pass occupies residues 158–178 (MLGSVGAILAAILIIFFGWGW). At 179 to 311 (ADPLASIIVA…MEKQRDHHHH (133 aa)) the chain is on the cytoplasmic side.

Belongs to the cation diffusion facilitator (CDF) transporter (TC 2.A.4) family. SLC30A subfamily.

Its subcellular location is the cell membrane. Functionally, involved in divalent cation and potassium homeostasis in the cell. Catalyzes the active efflux of zinc, cadmium and cobalt, in exchange for potassium and H(+) ions. The polypeptide is Cadmium, cobalt and zinc/H(+)-K(+) antiporter (czcD) (Bacillus subtilis (strain 168)).